The sequence spans 1033 residues: Probable LRR receptor-like serine/threonine-protein kinase At1g56140 (1033 aa).

The signal sequence occupies residues 1-28 (MLRLWRYLCLLLTVWFLCNFGPVYVVRA). The Extracellular portion of the chain corresponds to 29–636 (QNRTGATTHP…PSKGKSMTGT (608 aa)). N-linked (GlcNAc...) asparagine glycosylation is found at N30, N60, and N94. LRR repeat units lie at residues 97–121 (ICRITNIKVYAMEVVGSIPQQLWTL), 122–145 (EYLTNLNLGQNVLTGSLPPALGNL), 147–169 (RMRWMTFGINALSGPIPKEIGLL), 170–193 (TDLRLLSISSNNFSGSIPDEIGRC), 195–217 (KLQQIYIDSSGLSGGLPVSFANL), 241–264 (WTKLTTLRILGTGLSGPIPASFSN), 265–288 (LTSLTELRLGDISNGNSSLEFIKD), 289–313 (MKSLSILVLRNNNLTGTIPSNIGEY), 314–337 (SSLRQLDLSFNKLHGTIPASLFNL), 339–361 (QLTHLFLGNNTLNGSLPTQKGQS), 363–382 (SNVDVSYNDLSGSLPSWVSL), 383–406 (PNLNLNLVANNFTLEGLDNRVLSG), and 422–445 (IYSDFSINCGGPEIRSVTEAVFER). N144 carries an N-linked (GlcNAc...) asparagine glycan. A glycan (N-linked (GlcNAc...) asparagine) is linked at N181. Residues N264, N280, and N301 are each glycosylated (N-linked (GlcNAc...) asparagine). 2 N-linked (GlcNAc...) asparagine glycosylation sites follow: N347 and N351. N393 is a glycosylation site (N-linked (GlcNAc...) asparagine). An N-linked (GlcNAc...) asparagine glycan is attached at N579. Residues 637 to 657 (IVGVIVGVGLLSIISGVVIFI) traverse the membrane as a helical segment. The Cytoplasmic segment spans residues 658 to 1033 (IRKRRKRYTD…MLGAQMNEGR (376 aa)). At T682 the chain carries Phosphothreonine. A Protein kinase domain is found at 693–951 (FDPSNKLGEG…LCTQTSHALR (259 aa)). Residues 699–707 (LGEGGFGPV) and K721 each bind ATP. At Y766 the chain carries Phosphotyrosine. D817 acts as the Proton acceptor in catalysis. 2 positions are modified to phosphoserine: S821 and S850. Phosphothreonine is present on residues T851 and T856. At Y864 the chain carries Phosphotyrosine. Positions 1012–1033 (SEISPRNNDARPMLGAQMNEGR) are disordered.

This sequence belongs to the protein kinase superfamily. Ser/Thr protein kinase family.

The protein localises to the membrane. The catalysed reaction is L-seryl-[protein] + ATP = O-phospho-L-seryl-[protein] + ADP + H(+). It catalyses the reaction L-threonyl-[protein] + ATP = O-phospho-L-threonyl-[protein] + ADP + H(+). The polypeptide is Probable LRR receptor-like serine/threonine-protein kinase At1g56140 (Arabidopsis thaliana (Mouse-ear cress)).